We begin with the raw amino-acid sequence, 37 residues long: Cytochrome b6-f complex subunit 5 (37 aa).

A helical transmembrane segment spans residues 5 to 25; it reads LLSGIVLGLISITSAGLFVTA.

This sequence belongs to the PetG family. As to quaternary structure, the 4 large subunits of the cytochrome b6-f complex are cytochrome b6, subunit IV (17 kDa polypeptide, PetD), cytochrome f and the Rieske protein, while the 4 small subunits are PetG, PetL, PetM and PetN. The complex functions as a dimer.

It is found in the plastid. It localises to the chloroplast thylakoid membrane. Functionally, component of the cytochrome b6-f complex, which mediates electron transfer between photosystem II (PSII) and photosystem I (PSI), cyclic electron flow around PSI, and state transitions. PetG is required for either the stability or assembly of the cytochrome b6-f complex. The protein is Cytochrome b6-f complex subunit 5 of Psilotum nudum (Whisk fern).